The sequence spans 197 residues: uncharacterized protein (197 aa).

The region spanning 33–184 (MISKIMDASS…IAEFMSILGK (152 aa)) is the SIS domain.

Belongs to the SIS family. PHI subfamily.

This is an uncharacterized protein from Methanothermobacter thermautotrophicus (strain ATCC 29096 / DSM 1053 / JCM 10044 / NBRC 100330 / Delta H) (Methanobacterium thermoautotrophicum).